Reading from the N-terminus, the 202-residue chain is NAD(P)H dehydrogenase (quinone) (202 aa).

The Flavodoxin-like domain maps to 7–193; it reads VLVLYYSMYG…TIARFQGRHF (187 aa). Residues 13–18 and 82–84 contribute to the FMN site; these read SMYGHI and TRF. Y15 contacts NAD(+). W102 contributes to the substrate binding site. FMN contacts are provided by residues 117–122 and H137; that span reads STATGG.

Belongs to the WrbA family. Requires FMN as cofactor.

The enzyme catalyses a quinone + NADH + H(+) = a quinol + NAD(+). It catalyses the reaction a quinone + NADPH + H(+) = a quinol + NADP(+). The protein is NAD(P)H dehydrogenase (quinone) of Rhodospirillum rubrum (strain ATCC 11170 / ATH 1.1.1 / DSM 467 / LMG 4362 / NCIMB 8255 / S1).